A 517-amino-acid polypeptide reads, in one-letter code: Maturase K (517 aa).

Belongs to the intron maturase 2 family. MatK subfamily.

Its subcellular location is the plastid. The protein resides in the chloroplast. Functionally, usually encoded in the trnK tRNA gene intron. Probably assists in splicing its own and other chloroplast group II introns. This Phalaenopsis japonica (Orchid) protein is Maturase K.